We begin with the raw amino-acid sequence, 236 residues long: N-acetyl-alpha-D-glucosaminyl L-malate deacetylase 1 (236 aa).

Residues His-12, Asp-15, and His-113 each coordinate Zn(2+).

This sequence belongs to the PIGL family. Zn(2+) is required as a cofactor.

The enzyme catalyses (S)-malyl N-acetyl-alpha-D-glucosaminide + H2O = (S)-malyl alpha-D-glucosaminide + acetate. Its function is as follows. Involved in bacillithiol (BSH) biosynthesis. Catalyzes the second step of the pathway, the deacetylation of N-acetylglucosaminylmalate (GlcNAc-Mal) to glucosamine malate (GlcN-Mal). The polypeptide is N-acetyl-alpha-D-glucosaminyl L-malate deacetylase 1 (Bacillus subtilis (strain 168)).